Here is a 175-residue protein sequence, read N- to C-terminus: uncharacterized protein (175 aa).

The first 22 residues, 1 to 22 (MNRIVGILISILMLACIGVTMA), serve as a signal peptide directing secretion.

This is an uncharacterized protein from Archaeoglobus fulgidus (strain ATCC 49558 / DSM 4304 / JCM 9628 / NBRC 100126 / VC-16).